Reading from the N-terminus, the 190-residue chain is uncharacterized protein (190 aa).

This is an uncharacterized protein from Aquifex aeolicus (strain VF5).